The primary structure comprises 150 residues: Myosin, essential light chain (150 aa).

EF-hand domains lie at 3–38 (ASADQIQECFSIFDKDNDGKVSVEDIGACLRSLGKS) and 75–110 (EQQKEMLDAFKALDKEGHGTIQGAELRQLLTTLGDY). Ca(2+) contacts are provided by D16, D18, D20, K22, and D27.

Myosin is a hexamer of 2 heavy chains and 4 light chains (two regulatory light chains and two essential light chains).

This Dictyostelium discoideum (Social amoeba) protein is Myosin, essential light chain (mlcE).